The following is a 503-amino-acid chain: Aspartyl/glutamyl-tRNA(Asn/Gln) amidotransferase subunit B (503 aa).

It belongs to the GatB/GatE family. GatB subfamily. Heterotrimer of A, B and C subunits.

The enzyme catalyses L-glutamyl-tRNA(Gln) + L-glutamine + ATP + H2O = L-glutaminyl-tRNA(Gln) + L-glutamate + ADP + phosphate + H(+). It carries out the reaction L-aspartyl-tRNA(Asn) + L-glutamine + ATP + H2O = L-asparaginyl-tRNA(Asn) + L-glutamate + ADP + phosphate + 2 H(+). In terms of biological role, allows the formation of correctly charged Asn-tRNA(Asn) or Gln-tRNA(Gln) through the transamidation of misacylated Asp-tRNA(Asn) or Glu-tRNA(Gln) in organisms which lack either or both of asparaginyl-tRNA or glutaminyl-tRNA synthetases. The reaction takes place in the presence of glutamine and ATP through an activated phospho-Asp-tRNA(Asn) or phospho-Glu-tRNA(Gln). In Cereibacter sphaeroides (strain ATCC 17029 / ATH 2.4.9) (Rhodobacter sphaeroides), this protein is Aspartyl/glutamyl-tRNA(Asn/Gln) amidotransferase subunit B.